A 636-amino-acid polypeptide reads, in one-letter code: Protein cueball (636 aa).

The N-terminal stretch at Met1–Ala27 is a signal peptide. Residues Ser28–Gly517 are Extracellular-facing. Asn83 and Asn109 each carry an N-linked (GlcNAc...) asparagine glycan. 3 LDL-receptor class B repeats span residues Arg122 to Arg169, Arg170 to Ser214, and Asp215 to Thr260. Residue Asn190 is glycosylated (N-linked (GlcNAc...) asparagine). Asn285 and Asn339 each carry an N-linked (GlcNAc...) asparagine glycan. EGF-like domains are found at residues Arg350–Glu384 and Glu419–Glu456. 5 cysteine pairs are disulfide-bonded: Cys359/Cys372, Cys374/Cys383, Cys423/Cys433, Cys427/Cys444, and Cys446/Cys455. Asn449, Asn458, and Asn493 each carry an N-linked (GlcNAc...) asparagine glycan. A helical membrane pass occupies residues Ser518–Val538. Residues His539–Thr636 are Cytoplasmic-facing.

It belongs to the cueball family.

The protein resides in the cell membrane. In terms of biological role, has a role in spermatogenesis and oogenesis. The chain is Protein cueball from Drosophila virilis (Fruit fly).